The sequence spans 291 residues: Elongation factor Ts (291 aa).

The involved in Mg(2+) ion dislocation from EF-Tu stretch occupies residues 79–82 (TDFV).

Belongs to the EF-Ts family.

The protein resides in the cytoplasm. Functionally, associates with the EF-Tu.GDP complex and induces the exchange of GDP to GTP. It remains bound to the aminoacyl-tRNA.EF-Tu.GTP complex up to the GTP hydrolysis stage on the ribosome. This is Elongation factor Ts from Dinoroseobacter shibae (strain DSM 16493 / NCIMB 14021 / DFL 12).